The primary structure comprises 448 residues: ATP-dependent protease ATPase subunit HslU (448 aa).

Residues valine 21, 63-68 (GVGKTE), aspartate 261, glutamate 326, and arginine 398 each bind ATP.

It belongs to the ClpX chaperone family. HslU subfamily. As to quaternary structure, a double ring-shaped homohexamer of HslV is capped on each side by a ring-shaped HslU homohexamer. The assembly of the HslU/HslV complex is dependent on binding of ATP.

Its subcellular location is the cytoplasm. Its function is as follows. ATPase subunit of a proteasome-like degradation complex; this subunit has chaperone activity. The binding of ATP and its subsequent hydrolysis by HslU are essential for unfolding of protein substrates subsequently hydrolyzed by HslV. HslU recognizes the N-terminal part of its protein substrates and unfolds these before they are guided to HslV for hydrolysis. In Persephonella marina (strain DSM 14350 / EX-H1), this protein is ATP-dependent protease ATPase subunit HslU.